Reading from the N-terminus, the 292-residue chain is Protease HtpX (292 aa).

2 helical membrane-spanning segments follow: residues 4-24 (IVLF…ILFL) and 32-52 (IYGL…LSLI). Position 139 (H139) interacts with Zn(2+). The active site involves E140. H143 is a binding site for Zn(2+). 2 helical membrane-spanning segments follow: residues 147–167 (GDMI…IFIS) and 193–213 (FVYF…ASII). E222 contacts Zn(2+).

This sequence belongs to the peptidase M48B family. Zn(2+) is required as a cofactor.

The protein resides in the cell membrane. In Buchnera aphidicola subsp. Acyrthosiphon pisum (strain 5A), this protein is Protease HtpX.